The primary structure comprises 318 residues: Probable casein kinase I homolog ECU11_1980 (318 aa).

The Protein kinase domain maps to 8–276; it reads YTICREIGKG…YLNSLLDKIF (269 aa). Residues 14 to 22 and Lys37 each bind ATP; that span reads IGKGGFGKV. Catalysis depends on Asp129, which acts as the Proton acceptor.

Belongs to the protein kinase superfamily. CK1 Ser/Thr protein kinase family. Casein kinase I subfamily.

Its subcellular location is the nucleus. It carries out the reaction L-seryl-[protein] + ATP = O-phospho-L-seryl-[protein] + ADP + H(+). It catalyses the reaction L-threonyl-[protein] + ATP = O-phospho-L-threonyl-[protein] + ADP + H(+). Functionally, involved in DNA repair. May regulate the activity of protein(s) involved in double strand break repair caused by gamma rays. In Encephalitozoon cuniculi (strain GB-M1) (Microsporidian parasite), this protein is Probable casein kinase I homolog ECU11_1980.